The following is a 294-amino-acid chain: Light-independent protochlorophyllide reductase iron-sulfur ATP-binding protein (294 aa).

ATP-binding positions include 10 to 15 (GIGKST) and K39. S14 lines the Mg(2+) pocket. [4Fe-4S] cluster is bound by residues C95 and C129. 180–181 (NR) contributes to the ATP binding site.

It belongs to the NifH/BchL/ChlL family. In terms of assembly, homodimer. Protochlorophyllide reductase is composed of three subunits; ChlL, ChlN and ChlB. Requires [4Fe-4S] cluster as cofactor.

Its subcellular location is the plastid. It is found in the chloroplast. It catalyses the reaction chlorophyllide a + oxidized 2[4Fe-4S]-[ferredoxin] + 2 ADP + 2 phosphate = protochlorophyllide a + reduced 2[4Fe-4S]-[ferredoxin] + 2 ATP + 2 H2O. It participates in porphyrin-containing compound metabolism; chlorophyll biosynthesis (light-independent). In terms of biological role, component of the dark-operative protochlorophyllide reductase (DPOR) that uses Mg-ATP and reduced ferredoxin to reduce ring D of protochlorophyllide (Pchlide) to form chlorophyllide a (Chlide). This reaction is light-independent. The L component serves as a unique electron donor to the NB-component of the complex, and binds Mg-ATP. The chain is Light-independent protochlorophyllide reductase iron-sulfur ATP-binding protein from Pleurastrum terricola (Filamentous green alga).